A 362-amino-acid chain; its full sequence is sn-glycerol-3-phosphate import ATP-binding protein UgpC (362 aa).

Residues 4 to 235 (LKLQAVTKSY…PATLFVASFI (232 aa)) form the ABC transporter domain. An ATP-binding site is contributed by 37-44 (GPSGCGKS).

The protein belongs to the ABC transporter superfamily. sn-glycerol-3-phosphate importer (TC 3.A.1.1.3) family. As to quaternary structure, the complex is composed of two ATP-binding proteins (UgpC), two transmembrane proteins (UgpA and UgpE) and a solute-binding protein (UgpB).

The protein localises to the cell inner membrane. The catalysed reaction is sn-glycerol 3-phosphate(out) + ATP + H2O = sn-glycerol 3-phosphate(in) + ADP + phosphate + H(+). In terms of biological role, part of the ABC transporter complex UgpBAEC involved in sn-glycerol-3-phosphate (G3P) import. Responsible for energy coupling to the transport system. The polypeptide is sn-glycerol-3-phosphate import ATP-binding protein UgpC (Yersinia enterocolitica serotype O:8 / biotype 1B (strain NCTC 13174 / 8081)).